A 52-amino-acid chain; its full sequence is QKLCARPSGTWSSGNCRNNNACRNFCIKLEKSRHGSCNIPFPSNKCICYFPC.

Cystine bridges form between C4–C52, C16–C37, C22–C46, and C26–C48.

In terms of assembly, forms oligomers in its native state.

In terms of biological role, possesses antifungal activity sensitive to inorganic cations. The polypeptide is Defensin-like protein 2B (Sinapis alba (White mustard)).